The sequence spans 174 residues: ATP-dependent protease subunit HslV (174 aa).

Residue Thr2 is part of the active site. Na(+)-binding residues include Ala157, Cys160, and Thr163.

This sequence belongs to the peptidase T1B family. HslV subfamily. As to quaternary structure, a double ring-shaped homohexamer of HslV is capped on each side by a ring-shaped HslU homohexamer. The assembly of the HslU/HslV complex is dependent on binding of ATP.

It is found in the cytoplasm. The catalysed reaction is ATP-dependent cleavage of peptide bonds with broad specificity.. Allosterically activated by HslU binding. In terms of biological role, protease subunit of a proteasome-like degradation complex believed to be a general protein degrading machinery. This chain is ATP-dependent protease subunit HslV, found in Shewanella baltica (strain OS195).